A 111-amino-acid polypeptide reads, in one-letter code: 4'-hydroxy-3'-methoxypropiophenone carrier protein ppsC (111 aa).

Positions 1 to 21 are disordered; sequence MSAQVMRPGTPQHEGQEFLSG.

Its pathway is secondary metabolite biosynthesis. Its function is as follows. 4'-hydroxy-3'-methoxypropiophenone carrier protein; part of the gene cluster that mediates the biosynthesis of 2,4'-dihydroxy-3'-methoxypropiophenone. The first step of the pathway is the conversion of acetate into acetyl-CoA by the acyl-CoA ligase ppsA. Acetyl-CoA is then used as a starter unit by the polyketide synthase ppsB and condensed with 4 malonyl-CoA unit to produce the pentaketide backbone. During polyketide extension, the polykedite chain is probably reduced and dehydrated by the KR and PT domains, respectively. O-methylation seems to be catalyzed by an unknown methyltransferase rather than by the CMeT domain of ppsB. Two hydroxylations and one further decarboxylation step catalyzed by yet unknown enzymes are then required to yield 4'-hydroxy-3'-methoxypropiophenone. PpsC functions as a carrier protein to transport 4'-hydroxy-3'-methoxypropiophenone to a specific cell compartment in which 4'-hydroxy-3'-methoxypropiophenone is hydroxylated to 2,4'-dihydroxy-3'-methoxypropiophenone by a still to be identified enzyme. This is 4'-hydroxy-3'-methoxypropiophenone carrier protein ppsC from Aspergillus oryzae (strain ATCC 42149 / RIB 40) (Yellow koji mold).